Reading from the N-terminus, the 225-residue chain is UPF0173 metal-dependent hydrolase Pars_0810 (225 aa).

It belongs to the UPF0173 family.

This Pyrobaculum arsenaticum (strain DSM 13514 / JCM 11321 / PZ6) protein is UPF0173 metal-dependent hydrolase Pars_0810.